We begin with the raw amino-acid sequence, 51 residues long: Insulin (51 aa).

Cystine bridges form between cysteine 7–cysteine 37, cysteine 19–cysteine 50, and cysteine 36–cysteine 41.

This sequence belongs to the insulin family. As to quaternary structure, heterodimer of a B chain and an A chain linked by two disulfide bonds.

It is found in the secreted. In terms of biological role, insulin decreases blood glucose concentration. It increases cell permeability to monosaccharides, amino acids and fatty acids. It accelerates glycolysis, the pentose phosphate cycle, and glycogen synthesis in liver. The polypeptide is Insulin (INS) (Capra hircus (Goat)).